The following is a 567-amino-acid chain: Proline--tRNA ligase (567 aa).

It belongs to the class-II aminoacyl-tRNA synthetase family. ProS type 1 subfamily. In terms of assembly, homodimer.

The protein resides in the cytoplasm. The enzyme catalyses tRNA(Pro) + L-proline + ATP = L-prolyl-tRNA(Pro) + AMP + diphosphate. In terms of biological role, catalyzes the attachment of proline to tRNA(Pro) in a two-step reaction: proline is first activated by ATP to form Pro-AMP and then transferred to the acceptor end of tRNA(Pro). As ProRS can inadvertently accommodate and process non-cognate amino acids such as alanine and cysteine, to avoid such errors it has two additional distinct editing activities against alanine. One activity is designated as 'pretransfer' editing and involves the tRNA(Pro)-independent hydrolysis of activated Ala-AMP. The other activity is designated 'posttransfer' editing and involves deacylation of mischarged Ala-tRNA(Pro). The misacylated Cys-tRNA(Pro) is not edited by ProRS. This Stenotrophomonas maltophilia (strain R551-3) protein is Proline--tRNA ligase.